The chain runs to 568 residues: Periplasmic trehalase (568 aa).

The first 39 residues, 1-39 (MPYATARSGDVMSSAAPPCCTSLLGLSLSMFVAPGTLTA), serve as a signal peptide directing secretion. Substrate contacts are provided by residues Arg169, 176–177 (WD), Asn213, 222–224 (RSQ), 294–296 (RPE), and Gly327. Residues Asp329 and Glu511 each act as proton donor/acceptor in the active site. Glu526 serves as a coordination point for substrate.

This sequence belongs to the glycosyl hydrolase 37 family.

It localises to the periplasm. The enzyme catalyses alpha,alpha-trehalose + H2O = alpha-D-glucose + beta-D-glucose. Its function is as follows. Provides the cells with the ability to utilize trehalose at high osmolarity by splitting it into glucose molecules that can subsequently be taken up by the phosphotransferase-mediated uptake system. The protein is Periplasmic trehalase of Xanthomonas axonopodis pv. citri (strain 306).